Here is a 324-residue protein sequence, read N- to C-terminus: Beta-ketoacyl-[acyl-carrier-protein] synthase III (324 aa).

Residues cysteine 114 and histidine 246 contribute to the active site. The interval 247–251 (QANLR) is ACP-binding. The active site involves asparagine 276.

The protein belongs to the thiolase-like superfamily. FabH family. Homodimer.

Its subcellular location is the cytoplasm. The enzyme catalyses malonyl-[ACP] + acetyl-CoA + H(+) = 3-oxobutanoyl-[ACP] + CO2 + CoA. It participates in lipid metabolism; fatty acid biosynthesis. Catalyzes the condensation reaction of fatty acid synthesis by the addition to an acyl acceptor of two carbons from malonyl-ACP. Catalyzes the first condensation reaction which initiates fatty acid synthesis and may therefore play a role in governing the total rate of fatty acid production. Possesses both acetoacetyl-ACP synthase and acetyl transacylase activities. Its substrate specificity determines the biosynthesis of branched-chain and/or straight-chain of fatty acids. This chain is Beta-ketoacyl-[acyl-carrier-protein] synthase III, found in Campylobacter jejuni subsp. doylei (strain ATCC BAA-1458 / RM4099 / 269.97).